Consider the following 25-residue polypeptide: GLFSVLGSVAKHLLPHVVPVIAEKL.

Leucine amide is present on L25.

Expressed by the skin dorsal glands.

The protein localises to the secreted. Its function is as follows. Shows significant activity against Gram-positive organisms, but is less effective against Gram-negative organisms. The polypeptide is Caerin-1.18 (Ranoidea gracilenta (Dainty green tree frog)).